The sequence spans 154 residues: Superoxide dismutase [Cu-Zn] (154 aa).

3 residues coordinate Cu cation: His-47, His-49, and His-64. Residues Cys-58 and Cys-147 are joined by a disulfide bond. Residues Gly-62–Lys-89 are disordered. Positions 64, 72, 81, and 84 each coordinate Zn(2+). His-121 serves as a coordination point for Cu cation. Substrate is bound at residue Arg-144.

It belongs to the Cu-Zn superoxide dismutase family. Homodimer. Requires Cu cation as cofactor. Zn(2+) is required as a cofactor.

The protein resides in the cytoplasm. The catalysed reaction is 2 superoxide + 2 H(+) = H2O2 + O2. Its function is as follows. Destroys radicals which are normally produced within the cells and which are toxic to biological systems. In Yarrowia lipolytica (strain CLIB 122 / E 150) (Yeast), this protein is Superoxide dismutase [Cu-Zn] (SOD1).